The chain runs to 97 residues: Large ribosomal subunit protein bL28 (97 aa).

This sequence belongs to the bacterial ribosomal protein bL28 family.

This Rickettsia africae (strain ESF-5) protein is Large ribosomal subunit protein bL28.